A 568-amino-acid polypeptide reads, in one-letter code: Dual specificity tyrosine-phosphorylation-regulated kinase 3 (568 aa).

Residues 1-168 (MKWKEKLGDG…HGVIGGPNNG (168 aa)) are disordered. Polar residues predominate over residues 77 to 114 (SNTVQSDGISDSEKCSPTVSQGKSSDCLNTVKSNSSSK). One can recognise a Protein kinase domain in the interval 189 to 502 (YEVLKIIGKG…PAQALRHPWI (314 aa)). ATP contacts are provided by residues 195–203 (IGKGSFGQV) and lysine 218. Catalysis depends on aspartate 315, which acts as the Proton acceptor. Serine 330 is modified (phosphoserine). At tyrosine 349 the chain carries Phosphotyrosine. A Nuclear localization signal motif is present at residues 448–461 (RSRRGKKRGPPGSK).

Belongs to the protein kinase superfamily. CMGC Ser/Thr protein kinase family. MNB/DYRK subfamily. Interacts with SIRT1. Mg(2+) is required as a cofactor. Post-translationally, protein kinase activity is activated following autophosphorylation at Tyr-349. Autophosphorylation at Ser-330 stabilizes the protein and enhances the protein kinase activity. In terms of processing, ubiquitinated at anaphase by the anaphase-promoting complex (APC/C), leading to its degradation by the proteasome.

It localises to the nucleus. The protein localises to the cytoplasm. The protein resides in the nucleus speckle. Its subcellular location is the cytoplasmic granule. It is found in the cytoskeleton. It localises to the microtubule organizing center. The protein localises to the centrosome. The catalysed reaction is L-seryl-[protein] + ATP = O-phospho-L-seryl-[protein] + ADP + H(+). The enzyme catalyses L-threonyl-[protein] + ATP = O-phospho-L-threonyl-[protein] + ADP + H(+). It carries out the reaction L-tyrosyl-[protein] + ATP = O-phospho-L-tyrosyl-[protein] + ADP + H(+). With respect to regulation, protein kinase activity is activated following autophosphorylation at Tyr-349. Functionally, dual-specificity protein kinase that promotes disassembly of several types of membraneless organelles during mitosis, such as stress granules, nuclear speckles and pericentriolar material. Dual-specificity tyrosine-regulated kinases (DYRKs) autophosphorylate a critical tyrosine residue in their activation loop and phosphorylate their substrate on serine and threonine residues. Acts as a central dissolvase of membraneless organelles during the G2-to-M transition, after the nuclear-envelope breakdown: acts by mediating phosphorylation of multiple serine and threonine residues in unstructured domains of proteins, such as SRRM1 and PCM1. Does not mediate disassembly of all membraneless organelles: disassembly of P-body and nucleolus is not regulated by DYRK3. Dissolution of membraneless organelles at the onset of mitosis is also required to release mitotic regulators, such as ZNF207, from liquid-unmixed organelles where they are sequestered and keep them dissolved during mitosis. Regulates mTORC1 by mediating the dissolution of stress granules: during stressful conditions, DYRK3 partitions from the cytosol to the stress granule, together with mTORC1 components, which prevents mTORC1 signaling. When stress signals are gone, the kinase activity of DYRK3 is required for the dissolution of stress granule and mTORC1 relocation to the cytosol: acts by mediating the phosphorylation of the mTORC1 inhibitor AKT1S1, allowing full reactivation of mTORC1 signaling. Also acts as a negative regulator of EPO-dependent erythropoiesis: may place an upper limit on red cell production during stress erythropoiesis. Inhibits cell death due to cytokine withdrawal in hematopoietic progenitor cells. Promotes cell survival upon genotoxic stress through phosphorylation of SIRT1: this in turn inhibits p53/TP53 activity and apoptosis. In Macaca fascicularis (Crab-eating macaque), this protein is Dual specificity tyrosine-phosphorylation-regulated kinase 3.